The chain runs to 302 residues: Sulfate adenylyltransferase subunit 2 (302 aa).

It belongs to the PAPS reductase family. CysD subfamily. Heterodimer composed of CysD, the smaller subunit, and CysN.

The enzyme catalyses sulfate + ATP + H(+) = adenosine 5'-phosphosulfate + diphosphate. Its pathway is sulfur metabolism; hydrogen sulfide biosynthesis; sulfite from sulfate: step 1/3. Its function is as follows. With CysN forms the ATP sulfurylase (ATPS) that catalyzes the adenylation of sulfate producing adenosine 5'-phosphosulfate (APS) and diphosphate, the first enzymatic step in sulfur assimilation pathway. APS synthesis involves the formation of a high-energy phosphoric-sulfuric acid anhydride bond driven by GTP hydrolysis by CysN coupled to ATP hydrolysis by CysD. The chain is Sulfate adenylyltransferase subunit 2 from Klebsiella pneumoniae (strain 342).